Reading from the N-terminus, the 357-residue chain is DNA polymerase IV (357 aa).

Residues 4 to 185 enclose the UmuC domain; sequence IIHVDMDCYF…LSLRQIPGVG (182 aa). Mg(2+) is bound by residues Asp8 and Asp103. The active site involves Glu104.

Belongs to the DNA polymerase type-Y family. Monomer. Mg(2+) serves as cofactor.

It localises to the cytoplasm. It catalyses the reaction DNA(n) + a 2'-deoxyribonucleoside 5'-triphosphate = DNA(n+1) + diphosphate. Poorly processive, error-prone DNA polymerase involved in untargeted mutagenesis. Copies undamaged DNA at stalled replication forks, which arise in vivo from mismatched or misaligned primer ends. These misaligned primers can be extended by PolIV. Exhibits no 3'-5' exonuclease (proofreading) activity. May be involved in translesional synthesis, in conjunction with the beta clamp from PolIII. This Shewanella oneidensis (strain ATCC 700550 / JCM 31522 / CIP 106686 / LMG 19005 / NCIMB 14063 / MR-1) protein is DNA polymerase IV.